A 497-amino-acid polypeptide reads, in one-letter code: Serine/threonine-protein phosphatase 2A 56 kDa regulatory subunit beta isoform (497 aa).

Residues 1–19 are compositionally biased toward low complexity; that stretch reads METKLPPASTPTSPSSPGL. Disordered stretches follow at residues 1 to 55 and 475 to 497; these read METK…YQSN and TQGA…GGQS. 6 positions are modified to phosphoserine; by CLK2: serine 32, serine 35, serine 44, serine 46, serine 47, and serine 48. Basic residues predominate over residues 34–45; sequence RSLRRARPRRSH.

The protein belongs to the phosphatase 2A regulatory subunit B56 family. Component of the serine/threonine-protein phosphatase 2A complex (PP2A). This complex consists of a common heterodimeric core enzyme, composed of a 36 kDa catalytic subunit (subunit C) and a 65 kDa constant scaffold subunit (PR65 or subunit A), that associates with a variety of regulatory subunits. Proteins that associate with the core dimer include three families of regulatory subunits B (the R2/B/PR55/B55, R3/B''/PR72/PR130/PR59 and R5/B'/B56 families), the 48 kDa variable regulatory subunit, viral proteins, and cell signaling molecules. Interacts with SGO1. Interacts with AKT1. Interacts with CUL3 and KLHL15; this interaction leads to proteasomal degradation. Ubiquitinated by E3 CUL3-KLHL15 complex; this modification leads to proteasomal degradation. As to expression, highest expression in brain.

Its subcellular location is the cytoplasm. Its function is as follows. As the regulatory component of the serine/threonine-protein phosphatase 2A (PP2A) holoenzyme, modulates substrate specificity, subcellular localization, and responsiveness to phosphorylation. The phosphorylated form mediates the interaction between PP2A and AKT1, leading to AKT1 dephosphorylation. The polypeptide is Serine/threonine-protein phosphatase 2A 56 kDa regulatory subunit beta isoform (PPP2R5B) (Homo sapiens (Human)).